The primary structure comprises 599 residues: Sulfite reductase [NADPH] flavoprotein alpha-component (599 aa).

The region spanning 64–202 (ITIISASQTG…AASEWRARVV (139 aa)) is the Flavodoxin-like domain. FMN-binding positions include 70–75 (SQTGNA), 117–120 (STQG), and 153–162 (LGDSSYEFFC). One can recognise an FAD-binding FR-type domain in the interval 234 to 448 (DAPLVASLSV…IEHNDNFRLP (215 aa)). FAD is bound by residues T322, A356, 386–389 (RLYS), 404–406 (TVG), Y410, and 419–422 (GGAS). NADP(+) is bound by residues 519-520 (SR), 525-529 (KVYVQ), and D561. Residue Y599 participates in FAD binding.

The protein belongs to the NADPH-dependent sulphite reductase flavoprotein subunit CysJ family. It in the N-terminal section; belongs to the flavodoxin family. In the C-terminal section; belongs to the flavoprotein pyridine nucleotide cytochrome reductase family. Alpha(8)-beta(8). The alpha component is a flavoprotein, the beta component is a hemoprotein. Requires FAD as cofactor. It depends on FMN as a cofactor.

The enzyme catalyses hydrogen sulfide + 3 NADP(+) + 3 H2O = sulfite + 3 NADPH + 4 H(+). The protein operates within sulfur metabolism; hydrogen sulfide biosynthesis; hydrogen sulfide from sulfite (NADPH route): step 1/1. Functionally, component of the sulfite reductase complex that catalyzes the 6-electron reduction of sulfite to sulfide. This is one of several activities required for the biosynthesis of L-cysteine from sulfate. The flavoprotein component catalyzes the electron flow from NADPH -&gt; FAD -&gt; FMN to the hemoprotein component. This Shigella dysenteriae serotype 1 (strain Sd197) protein is Sulfite reductase [NADPH] flavoprotein alpha-component.